A 346-amino-acid polypeptide reads, in one-letter code: Phosphoribosylformylglycinamidine cyclo-ligase (346 aa).

Belongs to the AIR synthase family.

It is found in the cytoplasm. The enzyme catalyses 2-formamido-N(1)-(5-O-phospho-beta-D-ribosyl)acetamidine + ATP = 5-amino-1-(5-phospho-beta-D-ribosyl)imidazole + ADP + phosphate + H(+). It functions in the pathway purine metabolism; IMP biosynthesis via de novo pathway; 5-amino-1-(5-phospho-D-ribosyl)imidazole from N(2)-formyl-N(1)-(5-phospho-D-ribosyl)glycinamide: step 2/2. The sequence is that of Phosphoribosylformylglycinamidine cyclo-ligase from Vibrio vulnificus (strain YJ016).